A 1647-amino-acid polypeptide reads, in one-letter code: Transcription elongation factor SPT6 homolog (1647 aa).

Residues 1-209 (MARNAISDDE…SKKKKYRQGS (209 aa)) are disordered. The segment covering 7–20 (SDDEEDHELEDDDG) has biased composition (acidic residues). Residues 21 to 30 (EPVHGDPAEH) show a composition bias toward basic and acidic residues. Over residues 31 to 67 (DENDDEEDDDDVGNEYENDGFIVNDEDEEEEEEEDEE) the composition is skewed to acidic residues. The span at 103–114 (KFKKRQYKRLKK) shows a compositional bias: basic residues. Basic and acidic residues predominate over residues 132–151 (DSRGGTRRSAEDKIKDRLFD). Residues 152–191 (DVDVDDPPDDVGDEEDLVVEEDVVGSEDEMADFIVDEDDE) show a composition bias toward acidic residues. An S1 motif domain is found at 1103-1174 (GRIVQASVRR…QRYQVFLICK (72 aa)). Positions 1429–1647 (PMRSPADHGS…RKSDGGGGGW (219 aa)) are disordered. 2 repeat units span residues 1443–1444 (GW) and 1452–1453 (GW). The interval 1443–1647 (GWGSSQSEGG…RKSDGGGGGW (205 aa)) is 12 X 2 AA repeats of [WG]-[GW] repeats. Residues 1462 to 1471 (SGRGGEYRNG) are compositionally biased toward gly residues. Residues 1496–1507 (RRDDMNSDRQDG) are compositionally biased toward basic and acidic residues. 6 repeat units span residues 1511-1512 (WG), 1522-1523 (GW), 1530-1531 (GW), 1547-1548 (GW), 1563-1564 (WG), and 1574-1575 (GW). Gly residues-rich tracts occupy residues 1519–1532 (ADGG…GGWG), 1539–1552 (KTGG…GSES), 1561–1579 (GSWG…GNDS), and 1588–1600 (GGFG…GGSD). Repeat copies occupy residues 1601–1602 (WG), 1615–1616 (GW), 1630–1631 (GW), and 1646–1647 (GW).

This sequence belongs to the SPT6 family. Interacts (via N-terminus) with IWS1. Expressed in shoot apical meristem, leaf primordia, vasculature of young leaves, inflorescence meristem, floral meristem, young floral organs, developing ovules and anthers.

It localises to the nucleus. Its function is as follows. Transcription elongation factor that enhances the transcription elongation by RNA polymerase II (RNAPII). Plays an important role in regulating embryo apical and basal patterning during early embryogenesis, partly through negative regulation of the transcription factors PHABULOSA and PHAVOLUTA. The sequence is that of Transcription elongation factor SPT6 homolog from Arabidopsis thaliana (Mouse-ear cress).